A 727-amino-acid polypeptide reads, in one-letter code: Catalase-peroxidase (727 aa).

Residues 1–21 (MDAKVEDNIAGKCPMGHGRGP) form a disordered region. A cross-link (tryptophyl-tyrosyl-methioninium (Trp-Tyr) (with M-243)) is located at residues 95–217 (WHAAGTYRIT…LGAVQMGLIY (123 aa)). Catalysis depends on His96, which acts as the Proton acceptor. A cross-link (tryptophyl-tyrosyl-methioninium (Tyr-Met) (with W-95)) is located at residues 217–243 (YVNPEGPNGNPDPLASARDIRETFARM). His258 lines the heme b pocket.

It belongs to the peroxidase family. Peroxidase/catalase subfamily. In terms of assembly, homodimer or homotetramer. Heme b is required as a cofactor. Post-translationally, formation of the three residue Trp-Tyr-Met cross-link is important for the catalase, but not the peroxidase activity of the enzyme.

The enzyme catalyses H2O2 + AH2 = A + 2 H2O. It carries out the reaction 2 H2O2 = O2 + 2 H2O. Its function is as follows. Bifunctional enzyme with both catalase and broad-spectrum peroxidase activity. Important for stationary phase survival. This chain is Catalase-peroxidase, found in Caulobacter vibrioides (strain ATCC 19089 / CIP 103742 / CB 15) (Caulobacter crescentus).